The chain runs to 457 residues: Cysteine desulfurase (457 aa).

Pyridoxal 5'-phosphate is bound by residues A127, T128, Q235, S255, and H257. The residue at position 258 (K258) is an N6-(pyridoxal phosphate)lysine. Position 295 (T295) interacts with pyridoxal 5'-phosphate. C381 acts as the Cysteine persulfide intermediate in catalysis. C381 contributes to the [2Fe-2S] cluster binding site. C381 is a binding site for Zn(2+). A Cysteine persulfide modification is found at C381.

It belongs to the class-V pyridoxal-phosphate-dependent aminotransferase family. NifS/IscS subfamily. As to quaternary structure, homodimer. Component of the mitochondrial core iron-sulfur cluster (ISC) complex composed of NFS1, LYRM4, NDUFAB1, ISCU, FXN, and FDX2; this complex is a heterohexamer containing two copies of each monomer. Component of cyteine desulfurase complex composed of NFS1, LYRM4 and NDUFAB1; this complex contributes to the activation of cysteine desulfurase activity and NFS1 stabilization. Interacts (homodimer form) with ISCU (D-state); each monomer interacts with the C-terminal regions of each NFS1 monomer. Interacts with HSPA9. Interacts (via homodimer form) with FDX2. Interacts (via homodimer form) with FXN. Interacts with LYRM4. Component of a complex composed of FXN, NFS1, LYRM4 and ISCU. Monomer. Homodimer. Oligomer. Interacts with ISCU. Component of the cysteine desulfurase complex composed of NFS1 and LYRM4; this complex contributes to the activation of cysteine desulfurase activity. Interacts with MOCS3. Pyridoxal 5'-phosphate serves as cofactor. N-gluconoylated. In terms of processing, cysteine persulfide intermediate is reduced by thiol-containing molecules like glutathione and L-cysteine. Persulfide reduction is a rate-limiting step of cysteine desulfurase catalytic cycle. Predominantly expressed in heart and skeletal muscle. Also found in brain, liver and pancreas.

It localises to the mitochondrion. It is found in the cytoplasm. The protein localises to the nucleus. The protein resides in the cytoskeleton. Its subcellular location is the microtubule organizing center. It localises to the centrosome. The enzyme catalyses (sulfur carrier)-H + L-cysteine = (sulfur carrier)-SH + L-alanine. It carries out the reaction L-cysteinyl-[cysteine desulfurase] + L-cysteine = S-sulfanyl-L-cysteinyl-[cysteine desulfurase] + L-alanine. With respect to regulation, active only in complex with LYRM4. Functionally, cysteine desulfurase, of the core iron-sulfur cluster (ISC) assembly complex, that catalyzes the desulfuration of L-cysteine to L-alanine, as component of the cysteine desulfurase complex, leading to the formation of a cysteine persulfide intermediate at the active site cysteine residue and participates in the [2Fe-2S] clusters assembly on the scaffolding protein ISCU. The persulfide is then transferred on the flexible Cys loop from the catalytic site of NFS1 to the surface of NFS1. After the NFS1-linked persulfide sulfur is transferred to one of the conserved Cys residues of the scaffold, a reaction assisted by FXN. The core iron-sulfur cluster (ISC) assembly complex is involved in the de novo synthesis of a [2Fe-2S] cluster, the first step of the mitochondrial iron-sulfur protein biogenesis. This process is initiated by the cysteine desulfurase complex (NFS1:LYRM4:NDUFAB1) that produces persulfide which is delivered on the scaffold protein ISCU in a FXN-dependent manner. Then this complex is stabilized by FDX2 which provides reducing equivalents to accomplish the [2Fe-2S] cluster assembly. Finally, the [2Fe-2S] cluster is transferred from ISCU to chaperone proteins, including HSCB, HSPA9 and GLRX5. Its function is as follows. May catalyze the desulfuration of L-cysteine to L-alanine as component of the cysteine desulfurase complex (NFS1:LYRM4), leading to the formation of a cysteine persulfide intermediate. Acts as a sulfur donor for MOCS3 by transferring the sulfur of the cysteine persulfide intermediate on MOCS3. The protein is Cysteine desulfurase of Homo sapiens (Human).